A 683-amino-acid polypeptide reads, in one-letter code: WD repeat-containing protein 48 homolog (683 aa).

7 WD repeats span residues 27-82 (SNRS…PVQY), 88-130 (QHTD…FIDC), 133-167 (THKDYVSCLAYAPIVEKAVSASFDHNIFVYDINAN), 176-215 (GCKDSIYSLATTPNLSLVLGAGTEKCIRLFDPRTNEKIMK), 218-257 (GHTDNVRALVVNDDGTRALSAGSDATIRLWDIGQQRCIAT), 260-299 (AHEEGVWTLQVDSSFTTVYSAGKDKMVVKTPLYDFTKSQL), and 302-343 (KEEA…QLSI). The disordered stretch occupies residues 341 to 364 (LSIGGDEDGPSTSNANHSVSASSS). A compositionally biased stretch (low complexity) spans 351–364 (STSNANHSVSASSS). Residues 389-428 (PGAPAIKKHAMLSDKRHVLTRDSDGNVALYDVLAARKIKD) form a WD 8 repeat.

Belongs to the WD repeat WDR48 family. In terms of assembly, interacts with usp-46; the interaction increases the catalytic activity of usp-46 in the presence of wdr-20. As to expression, expressed in several head neurons and cells in the tail including the anal depressor cell.

Together with wdr-20, binds to and stimulates the activity of the deubiquitinating enzyme usp-46, leading to deubiquitination and stabilization of the glr-1 glutamate receptor. This chain is WD repeat-containing protein 48 homolog (wdr-48), found in Caenorhabditis elegans.